The sequence spans 453 residues: Cobyrinate a,c-diamide synthase (453 aa).

The GATase cobBQ-type domain maps to 250 to 440 (RIAVPFDEAF…IHTHTACLPD (191 aa)). The Nucleophile role is filled by cysteine 332.

This sequence belongs to the CobB/CbiA family. Mg(2+) serves as cofactor.

It catalyses the reaction cob(II)yrinate + 2 L-glutamine + 2 ATP + 2 H2O = cob(II)yrinate a,c diamide + 2 L-glutamate + 2 ADP + 2 phosphate + 2 H(+). It carries out the reaction Ni-sirohydrochlorin + 2 L-glutamine + 2 ATP + 2 H2O = Ni-sirohydrochlorin a,c-diamide + 2 L-glutamate + 2 ADP + 2 phosphate + 2 H(+). It participates in cofactor biosynthesis; adenosylcobalamin biosynthesis; cob(II)yrinate a,c-diamide from sirohydrochlorin (anaerobic route): step 10/10. Catalyzes the ATP-dependent amidation of the two carboxylate groups at positions a and c of cobyrinate, using either L-glutamine or ammonia as the nitrogen source. Involved in the biosynthesis of the unique nickel-containing tetrapyrrole coenzyme F430, the prosthetic group of methyl-coenzyme M reductase (MCR), which plays a key role in methanogenesis and anaerobic methane oxidation. Catalyzes the ATP-dependent amidation of the two carboxylate groups at positions a and c of Ni-sirohydrochlorin, using L-glutamine or ammonia as the nitrogen source. This Methanosphaera stadtmanae (strain ATCC 43021 / DSM 3091 / JCM 11832 / MCB-3) protein is Cobyrinate a,c-diamide synthase.